Reading from the N-terminus, the 522-residue chain is 2-isopropylmalate synthase (522 aa).

The 263-residue stretch at 5–267 (VIIFDTTLRD…ETGINAKEIH (263 aa)) folds into the Pyruvate carboxyltransferase domain. Mn(2+) contacts are provided by aspartate 14, histidine 202, histidine 204, and asparagine 238. The segment at 392-522 (QLQQLVVQSD…MHKNRELGGV (131 aa)) is regulatory domain.

It belongs to the alpha-IPM synthase/homocitrate synthase family. LeuA type 1 subfamily. As to quaternary structure, homodimer. Mn(2+) is required as a cofactor.

It is found in the cytoplasm. It carries out the reaction 3-methyl-2-oxobutanoate + acetyl-CoA + H2O = (2S)-2-isopropylmalate + CoA + H(+). Its pathway is amino-acid biosynthesis; L-leucine biosynthesis; L-leucine from 3-methyl-2-oxobutanoate: step 1/4. Functionally, catalyzes the condensation of the acetyl group of acetyl-CoA with 3-methyl-2-oxobutanoate (2-ketoisovalerate) to form 3-carboxy-3-hydroxy-4-methylpentanoate (2-isopropylmalate). The sequence is that of 2-isopropylmalate synthase from Shewanella sp. (strain ANA-3).